Reading from the N-terminus, the 644-residue chain is MQDWTIEDSAELYQIHGWGEPYFKINDKGHVAVMPRGEGNGEIDLFHLVQDIQKRGLNMPMLIRFSDILADRIARLNACFVEAIREYDYPGIYKGVYPVKVNQQRHVVEEVVEFGRPFQYGLEAGSKPELLIALATLKTPGALIICNGYKDSEYIETALLAQRLGHTPFVVIERFHELTLLIEAAQKLGIRPLIGVRAKLTARGIGRWGDSTGDRAKFGLSAGEIMEVVAQLKAADLLSSLQLLHFHIGSQISAINVIKTALREASCVYVELAQMGAPMQYCDVGGGLAIDYDGSKTNFRASKNYNMQEYAYDVVAAFQDACRTKNVPVPTLVSESGRAITSHQSVLVFDVMGVSHLQFGEPEPPARNEHSIIRNLYETYTQITPDNVQEAFNDASQFKEEALSLFALGYLGLGERARAERLYWGCCEKILNLVRELDYIPDELADLEKNMASTYYCNFSVFQSAPDSWAIDQLFPIMPIHRLDEEPKARGTLADLTCDSDGKIDQFIDLRDVKGVLELHPVRPEEPYYLGMFLNGAYQEILGDMHNLFGDTNTVHIHLASDEPGEQSYRLEHVVKGDTMTEVLKYVQYDHEAMLESIRRETEQALRERRITLSESRLLLQHYERSLSGYTYLTNELQVELAAR.

K100 carries the post-translational modification N6-(pyridoxal phosphate)lysine. 282-292 (CDVGGGLAIDY) lines the substrate pocket.

Belongs to the Orn/Lys/Arg decarboxylase class-II family. SpeA subfamily. Mg(2+) is required as a cofactor. Pyridoxal 5'-phosphate serves as cofactor.

It carries out the reaction L-arginine + H(+) = agmatine + CO2. Functionally, catalyzes the biosynthesis of agmatine from arginine. The protein is Biosynthetic arginine decarboxylase of Gloeobacter violaceus (strain ATCC 29082 / PCC 7421).